The chain runs to 462 residues: Ammonium transporter Rh type B (462 aa).

Residues 1–11 (MTDPSTNMRLK) are Cytoplasmic-facing. A helical transmembrane segment spans residues 12–32 (LPITCFILQIILIILFGVLVQ). The Extracellular portion of the chain corresponds to 33–62 (YDEDTDAKKHHHGNHSESKSDIENDFYYRY). N-linked (GlcNAc...) asparagine glycosylation is present at Asn46. Residues 63–83 (PSFQDVHVMIFVGFGFLMTFL) traverse the membrane as a helical segment. At 84–94 (QRYGFSSVGFN) the chain is on the cytoplasmic side. Residues 95–115 (FLIAAFSLQWATLMQGFFHGL) form a helical membrane-spanning segment. Topologically, residues 116–125 (HEGKIHIGVE) are extracellular. A helical membrane pass occupies residues 126–146 (SMINADFCTGSVLISFGAVLG). Residues 147 to 152 (KTSPVQ) are Cytoplasmic-facing. A helical membrane pass occupies residues 153–173 (LLFMAVFEVTLFAVNEFILLT). Residues 174 to 180 (LLGTKDA) lie on the Extracellular side of the membrane. A helical transmembrane segment spans residues 181–201 (GGSMTIHTFGAYFGLMVTRIL). Topologically, residues 202–220 (YRPNLDKSKHKNCSVYHSD) are cytoplasmic. Residues 221-241 (LFAMIGTLYLWMFWPSFNSAV) traverse the membrane as a helical segment. Topologically, residues 242 to 302 (TEHGDPQHRT…VAAGTAGEMM (61 aa)) are extracellular. Residues 303 to 323 (LTPFGSMIVGFLAGIISVLGF) form a helical membrane-spanning segment. The Cytoplasmic segment spans residues 324-344 (KYLTPILENKLKIQDTCGIHN). Residues 345–365 (LHGMPGVLGAIVGAVTASLAS) traverse the membrane as a helical segment. Residues 366–395 (KEVYGEGLEKVFPDVASGKRTASDQGGVQA) are Extracellular-facing. Residues 396 to 416 (ISLAVTLGMALFGGLIVGFIL) form a helical membrane-spanning segment. The Cytoplasmic portion of the chain corresponds to 417 to 462 (KLPIFGAPRDTTCFEDSLYWEVPGEEESHEDQLTTVKTEESDKLNS). Positions 441–462 (EEESHEDQLTTVKTEESDKLNS) are disordered. The segment covering 453 to 462 (KTEESDKLNS) has biased composition (basic and acidic residues).

It belongs to the ammonium transporter (TC 2.A.49) family. Rh subfamily.

The protein localises to the basolateral cell membrane. Its subcellular location is the cytoplasmic vesicle membrane. Its function is as follows. Functions as an ammonia transporter. May play a role in the elimination of ammonia in the gill. The chain is Ammonium transporter Rh type B (rhbg) from Oryzias latipes (Japanese rice fish).